We begin with the raw amino-acid sequence, 505 residues long: Actin nucleation-promoting factor WASL (505 aa).

S2 bears the N-acetylserine mark. A WH1 domain is found at 34 to 141 (LGKKCVTMSS…KAVTDLLGRR (108 aa)). 2 disordered regions span residues 138–163 (LGRRQRKSEKRRDPPNGPNLPMATVD) and 184–205 (HTKEKKKGKAKKKRLTKADIGT). Positions 186 to 198 (KEKKKGKAKKKRL) are enriched in basic residues. A CRIB domain is found at 203 to 216 (IGTPSNFQHIGHVG). Position 242 is a phosphoserine; by TNK2 (S242). Phosphotyrosine; by FAK1 and TNK2 is present on Y256. A disordered region spans residues 266 to 406 (EAVKNELRRQ…HQVPTTAGNK (141 aa)). Composition is skewed to pro residues over residues 276–364 (APPP…PPPS) and 371–391 (VAPPPPPPPPPPPGPPPPPGL). The residue at position 307 (R307) is an Omega-N-methylarginine. WH2 domains are found at residues 405 to 422 (NKAALLDQIREGAQLKKV) and 433 to 450 (GRDALLDQIRQGIQLKSV). The tract at residues 476-505 (QKRSKAIHSSDEDEDEDDEEDFEDDDEWED) is disordered. Phosphoserine occurs at positions 484 and 485. Acidic residues predominate over residues 486–505 (DEDEDEDDEEDFEDDDEWED).

Binds actin and the Arp2/3 complex. Interacts with CDC42. Interacts with FCHSD1. Interacts with FCHSD2. Binds to SH3 domains of GRB2. Interacts with the C-terminal SH3 domain of DNMBP. Interacts with SNX9. Interacts with the WW domains of PRPF40A/FBP11. Interacts with PTK2/FAK1. Interacts with PACSIN1, PACSIN2 and PACSIN3. Interacts with NOSTRIN. Binds to TNK2. Interacts with SNX33. Interacts with NONO (via second RRM domain); the interaction is direct. Component of a multiprotein complex with NONO and SFPQ; associates with the complex via direct interaction with NONO. As to quaternary structure, (Microbial infection) Interacts with E.coli effector protein EspF(U). Identified in a complex containing at least WASL, BAIAP2L1 and E.coli EspF(U). In terms of assembly, (Microbial infection) Interacts with Shigella flexneri protein IcsA. The interaction with IcsA enhances the affinity of WASL for Arp2/3, thus assembling a tight complex which has maximal activity in actin assembly. In terms of processing, phosphorylation at Ser-242, Tyr-256, Ser-484 and Ser-485 enhances actin polymerization activity.

The protein localises to the cytoplasm. It localises to the cytoskeleton. The protein resides in the nucleus. Regulates actin polymerization by stimulating the actin-nucleating activity of the Arp2/3 complex. Involved in various processes, such as mitosis and cytokinesis, via its role in the regulation of actin polymerization. Together with CDC42, involved in the extension and maintenance of the formation of thin, actin-rich surface projections called filopodia. In addition to its role in the cytoplasm, also plays a role in the nucleus by regulating gene transcription, probably by promoting nuclear actin polymerization. Binds to HSF1/HSTF1 and forms a complex on heat shock promoter elements (HSE) that negatively regulates HSP90 expression. Plays a role in dendrite spine morphogenesis. Decreasing levels of DNMBP (using antisense RNA) alters apical junction morphology in cultured enterocytes, junctions curve instead of being nearly linear. This chain is Actin nucleation-promoting factor WASL (WASL), found in Homo sapiens (Human).